The following is a 223-amino-acid chain: Putative lipoprotein NMB1126/NMB1164 (223 aa).

The first 19 residues, 1 to 19 (MKTVSTAVVLAAAAVSLTG), serve as a signal peptide directing secretion. The N-palmitoyl cysteine moiety is linked to residue C20. The S-diacylglycerol cysteine moiety is linked to residue C20.

Its subcellular location is the cell membrane. The protein is Putative lipoprotein NMB1126/NMB1164 of Neisseria meningitidis serogroup B (strain ATCC BAA-335 / MC58).